Consider the following 238-residue polypeptide: Large ribosomal subunit protein uL2 (238 aa).

Positions 1–11 (MGKRLISQNRG) are enriched in polar residues. 2 disordered regions span residues 1–22 (MGKR…APSH) and 202–223 (FGGG…APPG).

This sequence belongs to the universal ribosomal protein uL2 family. As to quaternary structure, part of the 50S ribosomal subunit. Forms a bridge to the 30S subunit in the 70S ribosome.

In terms of biological role, one of the primary rRNA binding proteins. Required for association of the 30S and 50S subunits to form the 70S ribosome, for tRNA binding and peptide bond formation. It has been suggested to have peptidyltransferase activity; this is somewhat controversial. Makes several contacts with the 16S rRNA in the 70S ribosome. The chain is Large ribosomal subunit protein uL2 from Methanosarcina acetivorans (strain ATCC 35395 / DSM 2834 / JCM 12185 / C2A).